A 253-amino-acid polypeptide reads, in one-letter code: Large ribosomal subunit protein uL4 (253 aa).

The protein belongs to the universal ribosomal protein uL4 family. In terms of assembly, part of the 50S ribosomal subunit.

One of the primary rRNA binding proteins, this protein initially binds near the 5'-end of the 23S rRNA. It is important during the early stages of 50S assembly. It makes multiple contacts with different domains of the 23S rRNA in the assembled 50S subunit and ribosome. In terms of biological role, forms part of the polypeptide exit tunnel. In Methanococcoides burtonii (strain DSM 6242 / NBRC 107633 / OCM 468 / ACE-M), this protein is Large ribosomal subunit protein uL4.